A 242-amino-acid chain; its full sequence is Mannosyl-3-phosphoglycerate phosphatase (242 aa).

D8 functions as the Nucleophile in the catalytic mechanism. D8, D10, S169, and D204 together coordinate Mg(2+).

The protein belongs to the HAD-like hydrolase superfamily. MPGP family. Mg(2+) is required as a cofactor.

It localises to the cytoplasm. It carries out the reaction 2-O-(alpha-D-mannosyl)-3-phosphoglycerate + H2O = (2R)-2-O-(alpha-D-mannosyl)-glycerate + phosphate. Its pathway is carbohydrate biosynthesis; 2-(alpha-D-mannosyl)-D-glycerate biosynthesis; 2-(alpha-D-mannosyl)-D-glycerate from GDP-alpha-D-mannose (MPG route): step 2/2. Functionally, hydrolyzes mannosyl-3-phosphoglycerate (MPG) to form the osmolyte mannosylglycerate (MG). This Pyrococcus furiosus (strain ATCC 43587 / DSM 3638 / JCM 8422 / Vc1) protein is Mannosyl-3-phosphoglycerate phosphatase.